The chain runs to 411 residues: MSRRLFTSESVTEGHPDKIADQISDTILDALLREDPTSRVAVETLITTGLVHVAGEVTTKAYAPIAQLVREKILEIGYDSSKKGFDGASCGVSVSIGAQSPDIAQGVDTAYESRVEGDEDELDRQGAGDQGLMFGYACDETPELMPLPIHLAHRLSRRLSEVRKNGTIPYLRPDGKTQVTIEYDGDKAVRLDTVVVSSQHASDIDLESLLAPDIREFVVEPELKALVEDGIKLETEGYRLLVNPTGRFEIGGPMGDAGLTGRKIIIDTYGGMSRHGGGAFSGKDPSKVDRSAAYAMRWVAKNVVAAGLASRCEVQVAYAIGKAEPVGLFVETFGTNTIDTDKIEQAISEVFDLRPAAIIRDLDLLRPIYSQTAAYGHFGRSLPEFTWEKTDRVDGCGRPPVWRADLLPLVH.

Histidine 15 is a binding site for ATP. Aspartate 17 lines the Mg(2+) pocket. Glutamate 43 is a binding site for K(+). Residues glutamate 56 and glutamine 99 each coordinate L-methionine. The flexible loop stretch occupies residues glutamine 99–threonine 109. ATP-binding positions include aspartate 174 to lysine 176, arginine 247 to phenylalanine 248, aspartate 256, arginine 262 to lysine 263, alanine 279, and lysine 283. L-methionine is bound at residue aspartate 256. Lysine 287 is a binding site for L-methionine.

The protein belongs to the AdoMet synthase family. Homotetramer; dimer of dimers. Mg(2+) serves as cofactor. The cofactor is K(+).

The protein localises to the cytoplasm. It carries out the reaction L-methionine + ATP + H2O = S-adenosyl-L-methionine + phosphate + diphosphate. It participates in amino-acid biosynthesis; S-adenosyl-L-methionine biosynthesis; S-adenosyl-L-methionine from L-methionine: step 1/1. In terms of biological role, catalyzes the formation of S-adenosylmethionine (AdoMet) from methionine and ATP. The overall synthetic reaction is composed of two sequential steps, AdoMet formation and the subsequent tripolyphosphate hydrolysis which occurs prior to release of AdoMet from the enzyme. The chain is S-adenosylmethionine synthase from Streptomyces spectabilis.